The sequence spans 317 residues: L-lactate dehydrogenase 1 (317 aa).

Residues Val17, Asp38, Lys43, Tyr69, and 83–84 (GA) each bind NAD(+). Gln86 and Arg92 together coordinate substrate. NAD(+) is bound by residues Ser105, 122–124 (ATN), and Ser147. 124–127 (NPVD) serves as a coordination point for substrate. A substrate-binding site is contributed by 152 to 155 (DSAR). Residue His179 is the Proton acceptor of the active site. Tyr223 bears the Phosphotyrosine mark. Thr232 lines the substrate pocket.

The protein belongs to the LDH/MDH superfamily. LDH family. In terms of assembly, homotetramer.

The protein resides in the cytoplasm. The catalysed reaction is (S)-lactate + NAD(+) = pyruvate + NADH + H(+). The protein operates within fermentation; pyruvate fermentation to lactate; (S)-lactate from pyruvate: step 1/1. In terms of biological role, catalyzes the conversion of lactate to pyruvate (Potential). Appears to be the primary factor that allows S.aureus growth during nitrosative stress in both aerobically and anaerobically cultured cells. This Staphylococcus aureus (strain bovine RF122 / ET3-1) protein is L-lactate dehydrogenase 1.